Here is a 505-residue protein sequence, read N- to C-terminus: Buccalin (505 aa).

The N-terminal stretch at 1–25 is a signal peptide; the sequence is MAHHRGHRHILLYVSLALSLGLALA. Positions 26–62 are excised as a propeptide; it reads EDATDPSDDTGSFDDVEAVSEEADLDPYSMSQELNKR. Val-74 bears the Valine amide mark. Leucine amide occurs at positions 88 and 102. Gln-106 is subject to Pyrrolidone carboxylic acid. Position 116 is an isoleucine amide (Ile-116). Leu-129, Leu-143, Leu-157, Leu-171, Leu-185, Leu-199, Leu-213, Leu-227, Leu-241, Leu-254, Leu-267, Leu-281, Leu-294, Leu-307, Leu-321, and Leu-335 each carry leucine amide. Residue Glu-349 is modified to Glutamic acid 1-amide. Leu-363, Leu-377, Leu-391, Leu-405, Leu-419, and Leu-433 each carry leucine amide. 2 positions are modified to isoleucine amide: Ile-447 and Ile-461. Position 465 is a pyrrolidone carboxylic acid (Gln-465). Positions 472–505 are disordered; the sequence is SGRLGKRSSSEQEEEDVRQVEKRSTTEEQSSKSL. Position 475 is a leucine amide (Leu-475). Residues 488–505 show a composition bias toward basic and acidic residues; that stretch reads VRQVEKRSTTEEQSSKSL. A propeptide spanning residues 495–505 is cleaved from the precursor; the sequence is STTEEQSSKSL.

As to expression, cholinergic motor neuron B15 innervating buccal muscles in Aplysia.

It localises to the secreted. Modulatory neuropeptide, acting presynaptically on nerve terminals to inhibit acetylcholine release. This Aplysia californica (California sea hare) protein is Buccalin.